A 493-amino-acid chain; its full sequence is Glutamate--tRNA ligase (493 aa).

The 'HIGH' region signature appears at 10 to 20 (PSPTGTPHVGL). The 'KMSKS' region motif lies at 254 to 258 (KLSKR). Lys257 is an ATP binding site.

The protein belongs to the class-I aminoacyl-tRNA synthetase family. Glutamate--tRNA ligase type 1 subfamily. As to quaternary structure, monomer.

Its subcellular location is the cytoplasm. The catalysed reaction is tRNA(Glu) + L-glutamate + ATP = L-glutamyl-tRNA(Glu) + AMP + diphosphate. Catalyzes the attachment of glutamate to tRNA(Glu) in a two-step reaction: glutamate is first activated by ATP to form Glu-AMP and then transferred to the acceptor end of tRNA(Glu). This chain is Glutamate--tRNA ligase, found in Corynebacterium glutamicum (strain ATCC 13032 / DSM 20300 / JCM 1318 / BCRC 11384 / CCUG 27702 / LMG 3730 / NBRC 12168 / NCIMB 10025 / NRRL B-2784 / 534).